The following is a 271-amino-acid chain: Phosphonates import ATP-binding protein PhnC 2 (271 aa).

The region spanning 2–245 (LTIDKLTKRF…VARDIYGAGA (244 aa)) is the ABC transporter domain. 34–41 (GRSGAGKS) contacts ATP.

Belongs to the ABC transporter superfamily. Phosphonates importer (TC 3.A.1.9.1) family. The complex is composed of two ATP-binding proteins (PhnC), two transmembrane proteins (PhnE) and a solute-binding protein (PhnD).

Its subcellular location is the cell inner membrane. It catalyses the reaction phosphonate(out) + ATP + H2O = phosphonate(in) + ADP + phosphate + H(+). Part of the ABC transporter complex PhnCDE involved in phosphonates import. Responsible for energy coupling to the transport system. The protein is Phosphonates import ATP-binding protein PhnC 2 of Roseobacter denitrificans (strain ATCC 33942 / OCh 114) (Erythrobacter sp. (strain OCh 114)).